The primary structure comprises 485 residues: GTPase Der (485 aa).

EngA-type G domains lie at 3–167 (PTIA…PEPE) and 176–349 (PVFA…NAAM). GTP-binding positions include 9 to 16 (GRPNVGKS), 56 to 60 (DTGGF), 119 to 122 (NKGE), 182 to 189 (GRPNVGKS), 229 to 233 (DTAGV), and 294 to 297 (NKWD). Residues 350–434 (IKMPTPKITR…PLRIQYNVSE (85 aa)) enclose the KH-like domain. Positions 435–485 (NPYENAEDKPKKKPLRRVSLSNRIEKREGRKEEKNRFKKKTKVSVKKQFSK) are disordered. The span at 457–469 (RIEKREGRKEEKN) shows a compositional bias: basic and acidic residues. The segment covering 470-485 (RFKKKTKVSVKKQFSK) has biased composition (basic residues).

The protein belongs to the TRAFAC class TrmE-Era-EngA-EngB-Septin-like GTPase superfamily. EngA (Der) GTPase family. In terms of assembly, associates with the 50S ribosomal subunit.

Functionally, GTPase that plays an essential role in the late steps of ribosome biogenesis. This is GTPase Der from Neisseria meningitidis serogroup C / serotype 2a (strain ATCC 700532 / DSM 15464 / FAM18).